Reading from the N-terminus, the 488-residue chain is UDP-N-acetylmuramate--L-alanine ligase (488 aa).

127–133 (GTHGKTT) contributes to the ATP binding site.

The protein belongs to the MurCDEF family.

It is found in the cytoplasm. It catalyses the reaction UDP-N-acetyl-alpha-D-muramate + L-alanine + ATP = UDP-N-acetyl-alpha-D-muramoyl-L-alanine + ADP + phosphate + H(+). Its pathway is cell wall biogenesis; peptidoglycan biosynthesis. In terms of biological role, cell wall formation. This chain is UDP-N-acetylmuramate--L-alanine ligase, found in Shewanella sp. (strain ANA-3).